The chain runs to 282 residues: Putative 4-diphosphocytidyl-2-C-methyl-D-erythritol kinase (282 aa).

K9 is a catalytic residue. 93 to 103 (PVSAGLAGGSA) contributes to the ATP binding site. Residue D135 is part of the active site.

The protein belongs to the GHMP kinase family. IspE subfamily.

It catalyses the reaction 4-CDP-2-C-methyl-D-erythritol + ATP = 4-CDP-2-C-methyl-D-erythritol 2-phosphate + ADP + H(+). Catalyzes the phosphorylation of the position 2 hydroxy group of 4-diphosphocytidyl-2C-methyl-D-erythritol. The chain is Putative 4-diphosphocytidyl-2-C-methyl-D-erythritol kinase from Staphylococcus aureus (strain MRSA252).